The sequence spans 544 residues: Probable protein kinase UbiB (544 aa).

The 383-residue stretch at 123-505 folds into the Protein kinase domain; the sequence is EFDEQALASA…GRQKSHNVRS (383 aa). ATP is bound by residues 129 to 137 and Lys156; that span reads LASASIAQV. The active-site Proton acceptor is the Asp291. The chain crosses the membrane as a helical span at residues 522-540; the sequence is LPLWLSCGTLVTVLLVLLL.

This sequence belongs to the ABC1 family. UbiB subfamily.

The protein localises to the cell inner membrane. Its pathway is cofactor biosynthesis; ubiquinone biosynthesis [regulation]. Is probably a protein kinase regulator of UbiI activity which is involved in aerobic coenzyme Q (ubiquinone) biosynthesis. The sequence is that of Probable protein kinase UbiB from Actinobacillus pleuropneumoniae serotype 7 (strain AP76).